A 526-amino-acid chain; its full sequence is Lysine--tRNA ligase (526 aa).

Positions 30-38 (PSGYVHIGN) match the 'HIGH' region motif. Aspartate 95, cysteine 99, histidine 100, histidine 106, cysteine 177, and cysteine 199 together coordinate Zn(2+). The 'KMSKS' region motif lies at 280–284 (KMSGS).

This sequence belongs to the class-I aminoacyl-tRNA synthetase family. The cofactor is Zn(2+).

The protein resides in the cytoplasm. The catalysed reaction is tRNA(Lys) + L-lysine + ATP = L-lysyl-tRNA(Lys) + AMP + diphosphate. This Thermococcus kodakarensis (strain ATCC BAA-918 / JCM 12380 / KOD1) (Pyrococcus kodakaraensis (strain KOD1)) protein is Lysine--tRNA ligase (lysS).